We begin with the raw amino-acid sequence, 1123 residues long: Alpha-mannosidase E (1123 aa).

A signal peptide spans 1 to 21 (MNKTKLIKIIFVIGVWILLST). N-linked (GlcNAc...) asparagine glycans are attached at residues Asn-2 and Asn-38. The Extracellular segment spans residues 22–1072 (FIINIYNENF…KYNRPNHLAL (1051 aa)). Zn(2+) is bound by residues His-67 and Asp-69. A glycan (N-linked (GlcNAc...) asparagine) is linked at Asn-140. Positions 150 and 409 each coordinate Zn(2+). Catalysis depends on Asp-150, which acts as the Nucleophile. N-linked (GlcNAc...) asparagine glycans are attached at residues Asn-521, Asn-675, Asn-858, Asn-887, Asn-975, and Asn-990. Residues 1073 to 1093 (ILSLSIGTPAGILIIVIALVV) traverse the membrane as a helical segment. Residues 1094–1123 (IYKKRKNRKTLTSSYSLLNLILKDRADSSP) lie on the Cytoplasmic side of the membrane.

Belongs to the glycosyl hydrolase 38 family. Requires Zn(2+) as cofactor.

It localises to the membrane. It carries out the reaction Hydrolysis of terminal, non-reducing alpha-D-mannose residues in alpha-D-mannosides.. The sequence is that of Alpha-mannosidase E (manE) from Dictyostelium discoideum (Social amoeba).